Reading from the N-terminus, the 393-residue chain is S-adenosylmethionine synthase (393 aa).

Histidine 16 serves as a coordination point for ATP. Aspartate 18 contributes to the Mg(2+) binding site. Glutamate 44 provides a ligand contact to K(+). L-methionine-binding residues include glutamate 57 and glutamine 100. A flexible loop region spans residues 100 to 110; it reads QSNDIAQGVDH. ATP is bound by residues 167 to 169, 238 to 239, aspartate 247, 253 to 254, alanine 270, and lysine 274; these read DAK, RF, and RK. Aspartate 247 contributes to the L-methionine binding site. Lysine 278 provides a ligand contact to L-methionine.

This sequence belongs to the AdoMet synthase family. In terms of assembly, homotetramer; dimer of dimers. Mg(2+) is required as a cofactor. Requires K(+) as cofactor.

It is found in the cytoplasm. The enzyme catalyses L-methionine + ATP + H2O = S-adenosyl-L-methionine + phosphate + diphosphate. It participates in amino-acid biosynthesis; S-adenosyl-L-methionine biosynthesis; S-adenosyl-L-methionine from L-methionine: step 1/1. In terms of biological role, catalyzes the formation of S-adenosylmethionine (AdoMet) from methionine and ATP. The overall synthetic reaction is composed of two sequential steps, AdoMet formation and the subsequent tripolyphosphate hydrolysis which occurs prior to release of AdoMet from the enzyme. The protein is S-adenosylmethionine synthase of Acidovorax sp. (strain JS42).